A 245-amino-acid polypeptide reads, in one-letter code: 23S rRNA (guanosine-2'-O-)-methyltransferase RlmB (245 aa).

S-adenosyl-L-methionine-binding residues include G197, I217, and L226.

This sequence belongs to the class IV-like SAM-binding methyltransferase superfamily. RNA methyltransferase TrmH family. RlmB subfamily.

The protein resides in the cytoplasm. It carries out the reaction guanosine(2251) in 23S rRNA + S-adenosyl-L-methionine = 2'-O-methylguanosine(2251) in 23S rRNA + S-adenosyl-L-homocysteine + H(+). Functionally, specifically methylates the ribose of guanosine 2251 in 23S rRNA. This Photobacterium profundum (strain SS9) protein is 23S rRNA (guanosine-2'-O-)-methyltransferase RlmB.